The sequence spans 186 residues: Ribosome-recycling factor (186 aa).

Belongs to the RRF family.

It localises to the cytoplasm. Functionally, responsible for the release of ribosomes from messenger RNA at the termination of protein biosynthesis. May increase the efficiency of translation by recycling ribosomes from one round of translation to another. The protein is Ribosome-recycling factor of Chlorobium phaeobacteroides (strain BS1).